Reading from the N-terminus, the 660-residue chain is Bifunctional polymyxin resistance protein ArnA (660 aa).

Residues 1–304 (MKAVIFAYHD…TLGLVAGARL (304 aa)) are formyltransferase ArnAFT. Catalysis depends on histidine 104, which acts as the Proton donor; for formyltransferase activity. Residues arginine 114 and 136-140 (VKRAD) contribute to the (6R)-10-formyltetrahydrofolate site. The interval 314 to 660 (RRIRVLILGV…RSVDVAERAS (347 aa)) is dehydrogenase ArnADH. NAD(+) is bound by residues aspartate 347 and 368–369 (DI). UDP-alpha-D-glucuronate is bound by residues alanine 393, tyrosine 398, and 432–433 (TS). Glutamate 434 acts as the Proton acceptor; for decarboxylase activity in catalysis. UDP-alpha-D-glucuronate is bound by residues arginine 460, asparagine 492, 526–535 (KLIDGGQQKR), and tyrosine 613. The active-site Proton donor; for decarboxylase activity is arginine 619.

This sequence in the N-terminal section; belongs to the Fmt family. UDP-L-Ara4N formyltransferase subfamily. It in the C-terminal section; belongs to the NAD(P)-dependent epimerase/dehydratase family. UDP-glucuronic acid decarboxylase subfamily. In terms of assembly, homohexamer, formed by a dimer of trimers.

The enzyme catalyses UDP-alpha-D-glucuronate + NAD(+) = UDP-beta-L-threo-pentopyranos-4-ulose + CO2 + NADH. The catalysed reaction is UDP-4-amino-4-deoxy-beta-L-arabinose + (6R)-10-formyltetrahydrofolate = UDP-4-deoxy-4-formamido-beta-L-arabinose + (6S)-5,6,7,8-tetrahydrofolate + H(+). It functions in the pathway nucleotide-sugar biosynthesis; UDP-4-deoxy-4-formamido-beta-L-arabinose biosynthesis; UDP-4-deoxy-4-formamido-beta-L-arabinose from UDP-alpha-D-glucuronate: step 1/3. The protein operates within nucleotide-sugar biosynthesis; UDP-4-deoxy-4-formamido-beta-L-arabinose biosynthesis; UDP-4-deoxy-4-formamido-beta-L-arabinose from UDP-alpha-D-glucuronate: step 3/3. Its pathway is bacterial outer membrane biogenesis; lipopolysaccharide biosynthesis. Its function is as follows. Bifunctional enzyme that catalyzes the oxidative decarboxylation of UDP-glucuronic acid (UDP-GlcUA) to UDP-4-keto-arabinose (UDP-Ara4O) and the addition of a formyl group to UDP-4-amino-4-deoxy-L-arabinose (UDP-L-Ara4N) to form UDP-L-4-formamido-arabinose (UDP-L-Ara4FN). The modified arabinose is attached to lipid A and is required for resistance to polymyxin and cationic antimicrobial peptides. This Salmonella choleraesuis (strain SC-B67) protein is Bifunctional polymyxin resistance protein ArnA.